Here is a 381-residue protein sequence, read N- to C-terminus: Alkanesulfonate monooxygenase (381 aa).

Belongs to the SsuD family. In terms of assembly, homotetramer.

The enzyme catalyses an alkanesulfonate + FMNH2 + O2 = an aldehyde + FMN + sulfite + H2O + 2 H(+). Catalyzes the desulfonation of aliphatic sulfonates. The chain is Alkanesulfonate monooxygenase from Enterobacter sp. (strain 638).